The following is a 355-amino-acid chain: Tetraacyldisaccharide 4'-kinase (355 aa).

Residue 49 to 56 (SAGGTGKT) coordinates ATP.

This sequence belongs to the LpxK family.

It catalyses the reaction a lipid A disaccharide + ATP = a lipid IVA + ADP + H(+). It participates in glycolipid biosynthesis; lipid IV(A) biosynthesis; lipid IV(A) from (3R)-3-hydroxytetradecanoyl-[acyl-carrier-protein] and UDP-N-acetyl-alpha-D-glucosamine: step 6/6. Its function is as follows. Transfers the gamma-phosphate of ATP to the 4'-position of a tetraacyldisaccharide 1-phosphate intermediate (termed DS-1-P) to form tetraacyldisaccharide 1,4'-bis-phosphate (lipid IVA). The polypeptide is Tetraacyldisaccharide 4'-kinase (Chlorobium phaeobacteroides (strain DSM 266 / SMG 266 / 2430)).